We begin with the raw amino-acid sequence, 348 residues long: Rhodopsin (348 aa).

The residue at position 1 (Met1) is an N-acetylmethionine. The Extracellular segment spans residues 1-36 (MNGTEGPNFYVPFSNVTGVVRSPFEQPQYYLAEPWQ). Residues Asn2 and Asn15 are each glycosylated (N-linked (GlcNAc...) asparagine). The helical transmembrane segment at 37–61 (FSMLAAYMFLLIVLGFPINFLTLYV) threads the bilayer. The Cytoplasmic segment spans residues 62 to 73 (TVQHKKLRTPLN). Residues 74–96 (YILLNLAVADLFMVFGGFTTTLY) form a helical membrane-spanning segment. The Extracellular segment spans residues 97–110 (TSLHGYFVFGPTGC). Cys110 and Cys187 are oxidised to a cystine. Residues 111–133 (NLEGFFATLGGEIALWSLVVLAI) form a helical membrane-spanning segment. Positions 134-136 (ERY) match the 'Ionic lock' involved in activated form stabilization motif. Residues 134 to 152 (ERYVVVCKPMSNFRFGENH) lie on the Cytoplasmic side of the membrane. Residues 153–173 (AIMGVVFTWIMALACAAPPLV) traverse the membrane as a helical segment. Over 174-202 (GWSRYIPEGMQCSCGIDYYTLKPEVNNES) the chain is Extracellular. Residue Glu201 participates in Zn(2+) binding. The helical transmembrane segment at 203–224 (FVIYMFVVHFTIPMIVIFFCYG) threads the bilayer. Residues 225–252 (QLVFTVKEAAAQQQESATTQKAEKEVTR) are Cytoplasmic-facing. The chain crosses the membrane as a helical span at residues 253–274 (MVIIMVIFFLICWLPYASVAFY). The Extracellular portion of the chain corresponds to 275–286 (IFTHQGSNFGPI). Gln279 lines the Zn(2+) pocket. Residues 287-308 (FMTLPAFFAKSSSIYNPVIYIM) traverse the membrane as a helical segment. The residue at position 296 (Lys296) is an N6-(retinylidene)lysine. The Cytoplasmic segment spans residues 309 to 348 (LNKQFRNCMLTTLCCGKNPLGDDDASATASKTETSQVAPA). Residues Cys322 and Cys323 are each lipidated (S-palmitoyl cysteine). An interaction with SAG region spans residues 330-348 (DDDASATASKTETSQVAPA). A Phosphoserine modification is found at Ser334. Thr336 bears the Phosphothreonine mark. Ser338 bears the Phosphoserine mark. Phosphothreonine occurs at positions 340 and 342. A Phosphoserine modification is found at Ser343.

This sequence belongs to the G-protein coupled receptor 1 family. Opsin subfamily. Homodimer. May form a complex composed of RHO, GRK1 and RCVRN in a Ca(2+)-dependent manner; RCVRN prevents the interaction between GRK1 and RHO. Interacts with GRK1. Interacts (phosphorylated form) with SAG. Interacts with GNAT1. Interacts with GNAT3. SAG and G-proteins compete for a common binding site. Interacts with PRCD; the interaction promotes PRCD stability. Forms a complex with ASAP1 and ARF4. Forms a complex with ASAP1, RAB11A, Rabin8/RAB3IP, ARF4 and RAB11FIP3; the complex regulates Golgi-to-cilia rhodopsin/RHO transport in photoreceptors. Phosphorylated on some or all of the serine and threonine residues present in the C-terminal region. In terms of processing, contains one covalently linked retinal chromophore. Upon light absorption, the covalently bound 11-cis-retinal is converted to all-trans-retinal. After hydrolysis of the Schiff base and release of the covalently bound all-trans-retinal, active rhodopsin is regenerated by binding of a fresh molecule of 11-cis-retinal. As to expression, rod-shaped photoreceptor cells in the retina (at protein level).

The protein localises to the membrane. It is found in the cell projection. It localises to the cilium. Its subcellular location is the photoreceptor outer segment. In terms of biological role, photoreceptor required for image-forming vision at low light intensity. Required for photoreceptor cell viability after birth. Light-induced isomerization of 11-cis to all-trans retinal triggers a conformational change that activates signaling via G-proteins. Subsequent receptor phosphorylation mediates displacement of the bound G-protein alpha subunit by the arrestin SAG and terminates signaling. This Mus musculus (Mouse) protein is Rhodopsin (Rho).